The chain runs to 614 residues: BPI fold-containing family B member 4 (614 aa).

The first 18 residues, 1–18 (MWMAWCVAALSVVAVCGT), serve as a signal peptide directing secretion. N-linked (GlcNAc...) asparagine glycosylation occurs at N273. A disulfide bond links C295 and C332.

This sequence belongs to the BPI/LBP/Plunc superfamily. BPI/LBP family. Expressed in nasal tissue.

The protein resides in the secreted. The protein localises to the cytoplasm. In terms of biological role, may have the capacity to recognize and bind specific classes of odorants. May act as a carrier molecule, transporting odorants across the mucus layer to access receptor sites. May serve as a primary defense mechanism by recognizing and removing potentially harmful odorants or pathogenic microorganisms from the mucosa or clearing excess odorant from mucus to enable new odorant stimuli to be received. In Homo sapiens (Human), this protein is BPI fold-containing family B member 4 (BPIFB4).